The primary structure comprises 213 residues: Golgi apparatus membrane protein TVP23 homolog A (213 aa).

4 consecutive transmembrane segments (helical) span residues 32-52 (PLAT…YVSC), 54-74 (WFSK…SLDF), 123-143 (IFWL…FSTL), and 150-170 (WLAL…GYIL).

Belongs to the TVP23 family.

The protein resides in the membrane. This is Golgi apparatus membrane protein TVP23 homolog A (TVP23A) from Homo sapiens (Human).